The following is a 346-amino-acid chain: Protein RecA (346 aa).

ATP is bound at residue 66 to 73; the sequence is GPESSGKT.

This sequence belongs to the RecA family.

Its subcellular location is the cytoplasm. Its function is as follows. Can catalyze the hydrolysis of ATP in the presence of single-stranded DNA, the ATP-dependent uptake of single-stranded DNA by duplex DNA, and the ATP-dependent hybridization of homologous single-stranded DNAs. It interacts with LexA causing its activation and leading to its autocatalytic cleavage. This chain is Protein RecA, found in Aromatoleum aromaticum (strain DSM 19018 / LMG 30748 / EbN1) (Azoarcus sp. (strain EbN1)).